The chain runs to 699 residues: Elongation factor G (699 aa).

Residues 8-283 (EHIRNIGICA…AVVDFLPSPI (276 aa)) form the tr-type G domain. Residues 17-24 (AHIDAGKT), 81-85 (DTPGH), and 135-138 (NKMD) contribute to the GTP site.

It belongs to the TRAFAC class translation factor GTPase superfamily. Classic translation factor GTPase family. EF-G/EF-2 subfamily.

The protein resides in the cytoplasm. Its function is as follows. Catalyzes the GTP-dependent ribosomal translocation step during translation elongation. During this step, the ribosome changes from the pre-translocational (PRE) to the post-translocational (POST) state as the newly formed A-site-bound peptidyl-tRNA and P-site-bound deacylated tRNA move to the P and E sites, respectively. Catalyzes the coordinated movement of the two tRNA molecules, the mRNA and conformational changes in the ribosome. This Rickettsia rickettsii (strain Iowa) protein is Elongation factor G.